A 210-amino-acid polypeptide reads, in one-letter code: Small ribosomal subunit protein uS3 (210 aa).

The KH type-2 domain maps to 38 to 106 (IRQFLKKRLY…EVFININEVR (69 aa)).

This sequence belongs to the universal ribosomal protein uS3 family. In terms of assembly, part of the 30S ribosomal subunit. Forms a tight complex with proteins S10 and S14.

Binds the lower part of the 30S subunit head. Binds mRNA in the 70S ribosome, positioning it for translation. The chain is Small ribosomal subunit protein uS3 from Trichlorobacter lovleyi (strain ATCC BAA-1151 / DSM 17278 / SZ) (Geobacter lovleyi).